We begin with the raw amino-acid sequence, 115 residues long: Thioredoxin-1 (115 aa).

The Thioredoxin domain occupies 2–114; that stretch reads LKRCNFKNQV…RQKVLEHVSA (113 aa). Active-site nucleophile residues include Cys39 and Cys42. Cys39 and Cys42 form a disulfide bridge.

Belongs to the thioredoxin family. As to expression, expressed in ASJ and ASI ciliated sensory neurons. Expressed in the intestine (at protein level).

In terms of biological role, participates in various redox reactions through the reversible oxidation of its active center dithiol to a disulfide and catalyzes dithiol-disulfide exchange reactions. Shown to facilitate the reduction of insulin disulfide bonds. Might play a role in the reversible nitrosylation of cysteine residues in target proteins, and thereby contributing to the response to intracellular nitric oxide. Shapes the ASJ sensory neuron biphasic response to nitric oxide (NO) exposure; trans-nitrosylation activity might inhibit calcium flux to the cytoplasm in ASJ neurons when exposed to a NO stimulus, whereas de-nitrosylation activity might promote calcium flux when NO is diminished. By regulating the NO-induced ASJ sensory neuron activity, mediates the avoidance response to NO-producing organisms like P.aeruginosa. Positively regulates life span extension under normal and caloric restriction conditions, dauer formation and the oxidative stress response. Contributes to the down-regulation of expression of the insulin-like neuropeptide daf-28 in the ASJ neurons in a redox-independent fashion, thereby promoting dauer formation. Negatively regulates the nuclear localization of the intestinal skn-1 transcription factor in a p38 MAPK pathway-dependent and redox-independent fashion. The chain is Thioredoxin-1 (trx-1) from Caenorhabditis elegans.